An 874-amino-acid chain; its full sequence is Alanine--tRNA ligase (874 aa).

Residues His563, His567, Cys665, and His669 each contribute to the Zn(2+) site.

Belongs to the class-II aminoacyl-tRNA synthetase family. Zn(2+) is required as a cofactor.

Its subcellular location is the cytoplasm. It catalyses the reaction tRNA(Ala) + L-alanine + ATP = L-alanyl-tRNA(Ala) + AMP + diphosphate. In terms of biological role, catalyzes the attachment of alanine to tRNA(Ala) in a two-step reaction: alanine is first activated by ATP to form Ala-AMP and then transferred to the acceptor end of tRNA(Ala). Also edits incorrectly charged Ser-tRNA(Ala) and Gly-tRNA(Ala) via its editing domain. This chain is Alanine--tRNA ligase, found in Haemophilus influenzae (strain PittGG).